Consider the following 142-residue polypeptide: ATP synthase epsilon chain, chloroplastic (142 aa).

This sequence belongs to the ATPase epsilon chain family. F-type ATPases have 2 components, CF(1) - the catalytic core - and CF(0) - the membrane proton channel. CF(1) has five subunits: alpha(3), beta(3), gamma(1), delta(1), epsilon(1). CF(0) has three main subunits: a, b and c.

It is found in the plastid. Its subcellular location is the chloroplast thylakoid membrane. Its function is as follows. Produces ATP from ADP in the presence of a proton gradient across the membrane. The polypeptide is ATP synthase epsilon chain, chloroplastic (Ostreococcus tauri).